An 87-amino-acid polypeptide reads, in one-letter code: Small ribosomal subunit protein bS20 (87 aa).

Positions 1–26 are disordered; the sequence is MANTKSALKRIRQTATRTARNRAVTS. The segment covering 13–23 has biased composition (low complexity); the sequence is QTATRTARNRA.

It belongs to the bacterial ribosomal protein bS20 family.

Its function is as follows. Binds directly to 16S ribosomal RNA. This Akkermansia muciniphila (strain ATCC BAA-835 / DSM 22959 / JCM 33894 / BCRC 81048 / CCUG 64013 / CIP 107961 / Muc) protein is Small ribosomal subunit protein bS20.